A 96-amino-acid polypeptide reads, in one-letter code: DNA-directed RNA polymerase subunit Rpo11 (96 aa).

Belongs to the archaeal Rpo11/eukaryotic RPB11/RPC19 RNA polymerase subunit family. In terms of assembly, part of the RNA polymerase complex.

It localises to the cytoplasm. It catalyses the reaction RNA(n) + a ribonucleoside 5'-triphosphate = RNA(n+1) + diphosphate. DNA-dependent RNA polymerase (RNAP) catalyzes the transcription of DNA into RNA using the four ribonucleoside triphosphates as substrates. The protein is DNA-directed RNA polymerase subunit Rpo11 of Nanoarchaeum equitans (strain Kin4-M).